The primary structure comprises 277 residues: ATP synthase subunit a (277 aa).

Helical transmembrane passes span 40-60 (AWHV…LIIF), 98-118 (SALI…MNLM), 154-174 (DLNL…FYSI), 219-239 (LFGN…IGYF), and 245-265 (FMWA…FMML).

The protein belongs to the ATPase A chain family. In terms of assembly, F-type ATPases have 2 components, CF(1) - the catalytic core - and CF(0) - the membrane proton channel. CF(1) has five subunits: alpha(3), beta(3), gamma(1), delta(1), epsilon(1). CF(0) has three main subunits: a(1), b(2) and c(9-12). The alpha and beta chains form an alternating ring which encloses part of the gamma chain. CF(1) is attached to CF(0) by a central stalk formed by the gamma and epsilon chains, while a peripheral stalk is formed by the delta and b chains.

The protein localises to the cell inner membrane. Its function is as follows. Key component of the proton channel; it plays a direct role in the translocation of protons across the membrane. The sequence is that of ATP synthase subunit a from Alteromonas mediterranea (strain DSM 17117 / CIP 110805 / LMG 28347 / Deep ecotype).